We begin with the raw amino-acid sequence, 155 residues long: Transmembrane protein C1orf162 (155 aa).

Positions 1–28 (MGGNGSTCKPDTERQGTLSTAAPTTSPA) are disordered. The segment covering 19 to 28 (STAAPTTSPA) has biased composition (low complexity). Residues 41 to 61 (ILAFCAGVLLTLLLIAFIFLI) traverse the membrane as a helical segment. A disordered region spans residues 92–114 (ADHSKPQAPDPHSDPPAKLSSIP). Ser-140 carries the post-translational modification Phosphoserine.

Its subcellular location is the membrane. The polypeptide is Transmembrane protein C1orf162 (C1orf162) (Homo sapiens (Human)).